Reading from the N-terminus, the 380-residue chain is Glucose-1-phosphate adenylyltransferase (380 aa).

Alpha-D-glucose 1-phosphate-binding positions include glycine 164, 179–180, and serine 190; that span reads EK.

It belongs to the bacterial/plant glucose-1-phosphate adenylyltransferase family. As to quaternary structure, homotetramer.

The catalysed reaction is alpha-D-glucose 1-phosphate + ATP + H(+) = ADP-alpha-D-glucose + diphosphate. It functions in the pathway glycan biosynthesis; glycogen biosynthesis. Its function is as follows. Involved in the biosynthesis of ADP-glucose, a building block required for the elongation reactions to produce glycogen. Catalyzes the reaction between ATP and alpha-D-glucose 1-phosphate (G1P) to produce pyrophosphate and ADP-Glc. The sequence is that of Glucose-1-phosphate adenylyltransferase from Streptococcus pneumoniae serotype 2 (strain D39 / NCTC 7466).